We begin with the raw amino-acid sequence, 256 residues long: MLEGKVAVVTGGGQGIGAAIAQLFAENGMKVVIAEIDEEAGVEREEMLRERGLDVTFVKTDVADENSVKNMVRKTVEIYGGVDVLVNNAAVMSVKSIFERPLEEWERVIRVNLTGPYICSRYCAEEMIKRGGGVIINIASTRAFQSEPDTEPYSASKGGLVALTHSLAVSLSRYHIRVVSISPGWIETSEWKKKSLRKKPDLRPIDHEQHPAGRVGNPLDIAHLCVFLADDEKAGFITGTNFIVDGGMTVKMIYEE.

Residue 9 to 33 (VTGGGQGIGAAIAQLFAENGMKVVI) participates in NADP(+) binding. Ser140 contacts substrate. The active-site Proton acceptor is Tyr153.

Belongs to the short-chain dehydrogenases/reductases (SDR) family.

This is an uncharacterized protein from Thermotoga maritima (strain ATCC 43589 / DSM 3109 / JCM 10099 / NBRC 100826 / MSB8).